A 218-amino-acid chain; its full sequence is Recombination protein RecR (218 aa).

The C4-type zinc finger occupies cysteine 56–cysteine 71. A Toprim domain is found at glycine 79–proline 195.

It belongs to the RecR family.

May play a role in DNA repair. It seems to be involved in an RecBC-independent recombinational process of DNA repair. It may act with RecF and RecO. This is Recombination protein RecR from Corynebacterium glutamicum (strain R).